Reading from the N-terminus, the 1451-residue chain is Protein clueless (1451 aa).

2 disordered regions span residues 1–101 and 264–286; these read MALE…EYAA and KKTR…VSEP. Positions 9 to 53 are enriched in low complexity; sequence NSNATATGDATATKASSKAKENNNTAGGKKNLNPIPSQQNSNQNL. Basic residues predominate over residues 66–75; that stretch reads GKKKGKKNRN. Phosphoserine is present on S270. Residues 424–666 enclose the Clu domain; sequence RAEDAFSSKL…RTFPPDVNFL (243 aa). 3 disordered regions span residues 722-775, 961-1012, and 1413-1451; these read AKKQ…ESKT, AVSS…SSVS, and ANNN…ATSS. Basic and acidic residues predominate over residues 748-758; it reads GADKTDVKEEK. Basic residues predominate over residues 969–984; the sequence is KKRGNGGKHNKHKSSK. Over residues 989 to 1010 the composition is skewed to low complexity; it reads QQQQQTTGNQNGSSSGTSNGSS.

The protein belongs to the CLU family.

Its subcellular location is the cytoplasm. Functionally, mRNA-binding protein involved in proper cytoplasmic distribution of mitochondria. This chain is Protein clueless, found in Drosophila yakuba (Fruit fly).